The chain runs to 281 residues: Energy-coupling factor transporter ATP-binding protein EcfA1 (281 aa).

Residues 7-242 enclose the ABC transporter domain; that stretch reads ISVEDIVFRY…NKELVRIGLD (236 aa). Residue 42–49 coordinates ATP; sequence GHNGSGKS. Glu168 functions as the Proton acceptor in the catalytic mechanism.

It belongs to the ABC transporter superfamily. Energy-coupling factor EcfA family. As to quaternary structure, forms a stable energy-coupling factor (ECF) transporter complex composed of 2 membrane-embedded substrate-binding proteins (S component), 2 ATP-binding proteins (A component) and 2 transmembrane proteins (T component).

Its subcellular location is the cell membrane. Its function is as follows. ATP-binding (A) component of a common energy-coupling factor (ECF) ABC-transporter complex. Unlike classic ABC transporters this ECF transporter provides the energy necessary to transport a number of different substrates. The polypeptide is Energy-coupling factor transporter ATP-binding protein EcfA1 (Bacillus subtilis (strain 168)).